Reading from the N-terminus, the 541-residue chain is MRLAYWMYEGTAHHGVGRIANSMRNVHAVFHAPQGDDYVNAIFAMLDRTPNFPAMTTSVVSGTDLARGTIRLPDTLRQVEERVHPDLIVVVASCSTILLQENLEIAAQHAGLQCEVMVYDANPYRMQEIVAAESLFTDLVKRFAKPQPRTERPTVNILGPASLGFHARHDLISLRRMLKTLGLEVNVVAPWGASIADLRRLPAAWLTIAPYRELGLRAAIYLEEQFGVPALLDAPIGVQPTLRWIERLRELLAQAGADVPMPPLTAFSLDGMSAPSAVPWFARTADMDSFSGKPAFVFGDATHVVGVTRFLRDELGMPIAGAGTYVKHQADWVREQLTGYVDEVLVTDEFQVVADRIAALRPELVCGTQMERHTSRRYDLNCMVISPPTHIENHLLAYRPFLGFDGADVIADEVYTTCTLGMEKHLIDLFGDAGLDLPEKTERTPVAEPAPVAATVESPQPQNEPAIAVASAPSLTSAPATPTPAAVVDPVWAADAEAMLKKVPFFVRGRVRGNVEKYARQRGHAVITAEVLLAAKEELGA.

Aspartate 36 serves as a coordination point for [4Fe-4S] cluster. The active-site Proton donor is aspartate 286. Residue 421–422 (GM) participates in substrate binding.

It belongs to the ChlB/BchB/BchZ family. In terms of assembly, protochlorophyllide reductase is composed of three subunits; BchL, BchN and BchB. Forms a heterotetramer of two BchB and two BchN subunits. Requires [4Fe-4S] cluster as cofactor.

It catalyses the reaction chlorophyllide a + oxidized 2[4Fe-4S]-[ferredoxin] + 2 ADP + 2 phosphate = protochlorophyllide a + reduced 2[4Fe-4S]-[ferredoxin] + 2 ATP + 2 H2O. It participates in porphyrin-containing compound metabolism; bacteriochlorophyll biosynthesis (light-independent). Functionally, component of the dark-operative protochlorophyllide reductase (DPOR) that uses Mg-ATP and reduced ferredoxin to reduce ring D of protochlorophyllide (Pchlide) to form chlorophyllide a (Chlide). This reaction is light-independent. The NB-protein (BchN-BchB) is the catalytic component of the complex. The polypeptide is Light-independent protochlorophyllide reductase subunit B (Chloroflexus aurantiacus (strain ATCC 29364 / DSM 637 / Y-400-fl)).